Reading from the N-terminus, the 233-residue chain is DNA repair protein RecO (233 aa).

This sequence belongs to the RecO family.

Involved in DNA repair and RecF pathway recombination. The chain is DNA repair protein RecO from Psychromonas ingrahamii (strain DSM 17664 / CCUG 51855 / 37).